The sequence spans 1409 residues: MKSLLDLFKQFTPDEHFDAIKIGMASPEKIRSWSFGEVKKPETINYRTFKPERDGLFCAKIFGPIKDYECLCGKYKRLKHRGVICEKCGVEVTQTKVRRERMGHIDLAAPCAHIWFLKSLPSRLGLVLDMTLRDIERVLYFEAYVVTDPGMTPLKKFGIMSEDDYDAKRKEYGDEFVAKMGAEGIKELLEGIDIEIEIEKLRGDLTGSEVKVKKNAKRLKVLEAFKKSGIKPEWMILEVLPVLPPDLRPLVPLDGGRFATSDLNDLYRRVINRNSRLRRLLELKAPEIIARNEKRMLQEAVDSLLDNGRRGKAMTGANKRALKSLADMIKGKSGRFRQNLLGKRVDYSGRSVITVGPTLKLHQCGLPKLMALELFKPFIFSRLEAMGIATTIKAAKKEVEAGTPVVWDILEEVIKEHPVMLNRAPTLHRLGIQAFEPILIEGKAIQLHPLVCAAFNADFDGDQMAVHVPLSVEAQLEARTLMLASNNVLFPASGEPSIVPSQDVVLGLYHATREKINGKGEGLVFADTGEVQRALDAGEAELHAKISVRLTEWTKDKATGEFVPETKLVDTTVGRALLSEILPKGLPFSNLNKALKKKEISKLINASFRKCGLKDTVVFADKLLQNGFRLATHAGFSVAIDDMLVPPQKAEILARAEAEVKEIEQQYVSGLVTAGERYNKVVDIWGKAGDDVSKVMMDQLKVQKTIDRNGKEVNEESFNAIYMMADSGARGSAAQIRQLAGMRGLMAKPDGSIIETPITANFREGLNVLQYFISTHGARKGLADTALKTANSGYLTRRLVDVTQDLVVTEDDCGTSNGSLMRAIVEGGEVIESLRDRILGRTAAEEVLHPETRAVLAQPGRMLDEDLIEELEAAGVDEVKVRTALTCETRYGLCAKCYGRDLGRGGLINLGEAVGVIAAQSIGEPGTQLTMRTFHIGGAASRAAVASSVEAKSNGIIGFNATMRYVTNTKGELVVIARSGEIIIQDEHGRERERHKVPYGATLTVKADQTIKAGTILANWDPLTRPIITEYAGTVKFENVEEGLTVAKQVDEVTGLSTLVVIDPKRRGSAKVVRPQVKLVDADGKEVKIPGTDHSVTIGFQVGALIQVRDGQEVGPGEVLARIPMEGQKTRDITGGLPRVAELFEARSPKDKGMLAEMTGTISFGKETKGKVRLQITDPDGKVWDELVPKEKNVLVHEGQVVNKGELIVDGPADPQDILRLLGIEELSRYIVDEVQDVYRLQGVKINDKHIEVIVRQMLRRVVVENPGESTYIAGEQVERSEILNTNEALQAEGKLPATYSNVLLGITKASLSTDSFISAASFQETTRVLTEAAIMGKRDELRGLKENVIVGRLIPAGTGLAYHQARKAKDAMDEAERRAIADAEAAELASAGTDDAAAEIDGSADTAD.

Zn(2+)-binding residues include cysteine 70, cysteine 72, cysteine 85, and cysteine 88. Positions 458, 460, and 462 each coordinate Mg(2+). Zn(2+) contacts are provided by cysteine 813, cysteine 887, cysteine 894, and cysteine 897.

The protein belongs to the RNA polymerase beta' chain family. As to quaternary structure, the RNAP catalytic core consists of 2 alpha, 1 beta, 1 beta' and 1 omega subunit. When a sigma factor is associated with the core the holoenzyme is formed, which can initiate transcription. Mg(2+) serves as cofactor. Zn(2+) is required as a cofactor.

It carries out the reaction RNA(n) + a ribonucleoside 5'-triphosphate = RNA(n+1) + diphosphate. Functionally, DNA-dependent RNA polymerase catalyzes the transcription of DNA into RNA using the four ribonucleoside triphosphates as substrates. This chain is DNA-directed RNA polymerase subunit beta', found in Acidovorax ebreus (strain TPSY) (Diaphorobacter sp. (strain TPSY)).